The chain runs to 384 residues: Beta-ureidopropionase (384 aa).

Residues 72-344 enclose the CN hydrolase domain; it reads VHVGLVQNRI…DGLLVAKLDL (273 aa). The active-site Proton acceptor is glutamate 119. Residue lysine 196 is the Proton donor of the active site. Cysteine 233 acts as the Nucleophile in catalysis. Position 378 is a phosphoserine (serine 378).

Belongs to the carbon-nitrogen hydrolase superfamily. BUP family. In terms of assembly, homodimer, homotetramer, homooctamer; can also form higher homooligomers.

It is found in the cytoplasm. It carries out the reaction 3-(carbamoylamino)propanoate + H2O + 2 H(+) = beta-alanine + NH4(+) + CO2. It catalyses the reaction 3-(carbamoylamino)-2-methylpropanoate + H2O + 2 H(+) = (R)-3-amino-2-methylpropanoate + NH4(+) + CO2. It participates in amino-acid biosynthesis; beta-alanine biosynthesis. Functionally, catalyzes a late step in pyrimidine degradation. Converts N-carbamoyl-beta-alanine (3-ureidopropanoate) into beta-alanine, ammonia and carbon dioxide. Likewise, converts N-carbamoyl-beta-aminoisobutyrate (3-ureidoisobutyrate) into beta-aminoisobutyrate, ammonia and carbon dioxide. The polypeptide is Beta-ureidopropionase (UPB1) (Pongo abelii (Sumatran orangutan)).